A 743-amino-acid chain; its full sequence is Ectonucleotide pyrophosphatase/phosphodiesterase C27A7.3 (743 aa).

The Cytoplasmic segment spans residues 1–23 (MSNRVVDVNSKKTGTSWKKKLMK). Residues 24–44 (IVIWSLAMLSFIAGLVLLGLV) form a helical; Signal-anchor for type II membrane protein membrane-spanning segment. Residues 45-743 (AAATISGSKN…LRRNITTSLW (699 aa)) lie on the Lumenal side of the membrane. Zn(2+)-binding residues include aspartate 87 and threonine 123. Threonine 123 acts as the Nucleophile in catalysis. Residue asparagine 195 is glycosylated (N-linked (GlcNAc...) asparagine). Zn(2+) is bound by residues aspartate 243, histidine 247, aspartate 286, and histidine 287. Residues asparagine 293 and asparagine 320 are each glycosylated (N-linked (GlcNAc...) asparagine). Histidine 383 lines the Zn(2+) pocket. N-linked (GlcNAc...) asparagine glycans are attached at residues asparagine 406, asparagine 434, and asparagine 536. 5 residues coordinate Ca(2+): aspartate 635, asparagine 637, aspartate 639, isoleucine 641, and aspartate 643. N-linked (GlcNAc...) asparagine glycosylation occurs at asparagine 737.

The protein belongs to the nucleotide pyrophosphatase/phosphodiesterase family. It depends on Zn(2+) as a cofactor. Ca(2+) serves as cofactor.

It is found in the membrane. In terms of biological role, probable phosphodiesterase. This chain is Ectonucleotide pyrophosphatase/phosphodiesterase C27A7.3, found in Caenorhabditis elegans.